The chain runs to 431 residues: Serine--tRNA ligase (431 aa).

L-serine is bound at residue 238–240 (TSE). 269 to 271 (RSE) is a binding site for ATP. Glu-292 is a binding site for L-serine. 356-359 (EISS) lines the ATP pocket. Ser-391 serves as a coordination point for L-serine.

It belongs to the class-II aminoacyl-tRNA synthetase family. Type-1 seryl-tRNA synthetase subfamily. As to quaternary structure, homodimer. The tRNA molecule binds across the dimer.

The protein localises to the cytoplasm. The enzyme catalyses tRNA(Ser) + L-serine + ATP = L-seryl-tRNA(Ser) + AMP + diphosphate + H(+). It catalyses the reaction tRNA(Sec) + L-serine + ATP = L-seryl-tRNA(Sec) + AMP + diphosphate + H(+). The protein operates within aminoacyl-tRNA biosynthesis; selenocysteinyl-tRNA(Sec) biosynthesis; L-seryl-tRNA(Sec) from L-serine and tRNA(Sec): step 1/1. In terms of biological role, catalyzes the attachment of serine to tRNA(Ser). Is also able to aminoacylate tRNA(Sec) with serine, to form the misacylated tRNA L-seryl-tRNA(Sec), which will be further converted into selenocysteinyl-tRNA(Sec). The chain is Serine--tRNA ligase from Leptothrix cholodnii (strain ATCC 51168 / LMG 8142 / SP-6) (Leptothrix discophora (strain SP-6)).